Here is a 317-residue protein sequence, read N- to C-terminus: Mitochondrial thiamine pyrophosphate carrier 1 (317 aa).

6 helical membrane passes run 21–41, 86–106, 122–142, 176–196, 207–227, and 281–300; these read AVSGLHAVVAGSVSGLVARSV, VPASAMYVLYGSLQFGTYAWL, LAVGALAGLVSSLLTYPLDLL, GGAWAIAATTLTTGLIFGIYE, LPWLAAAASPTAGLVSKAAVF, and GLTMALCKSTPTTVITLWVY. Solcar repeat units follow at residues 22-109, 116-201, and 206-306; these read VSGL…LNTA, PPQA…CTIA, and GLPW…CLRL.

This sequence belongs to the mitochondrial carrier (TC 2.A.29) family.

Its subcellular location is the mitochondrion inner membrane. Mitochondrial transporter that mediates uptake of thiamine pyrophosphate (ThPP) into mitochondria. The polypeptide is Mitochondrial thiamine pyrophosphate carrier 1 (TPC1) (Eremothecium gossypii (strain ATCC 10895 / CBS 109.51 / FGSC 9923 / NRRL Y-1056) (Yeast)).